Consider the following 283-residue polypeptide: ATP phosphoribosyltransferase (283 aa).

The protein belongs to the ATP phosphoribosyltransferase family. Long subfamily. The cofactor is Mg(2+).

It is found in the cytoplasm. The enzyme catalyses 1-(5-phospho-beta-D-ribosyl)-ATP + diphosphate = 5-phospho-alpha-D-ribose 1-diphosphate + ATP. Its pathway is amino-acid biosynthesis; L-histidine biosynthesis; L-histidine from 5-phospho-alpha-D-ribose 1-diphosphate: step 1/9. With respect to regulation, feedback inhibited by histidine. Catalyzes the condensation of ATP and 5-phosphoribose 1-diphosphate to form N'-(5'-phosphoribosyl)-ATP (PR-ATP). Has a crucial role in the pathway because the rate of histidine biosynthesis seems to be controlled primarily by regulation of HisG enzymatic activity. This is ATP phosphoribosyltransferase from Bifidobacterium longum subsp. infantis (strain ATCC 15697 / DSM 20088 / JCM 1222 / NCTC 11817 / S12).